A 362-amino-acid chain; its full sequence is Heme A synthase (362 aa).

Helical transmembrane passes span A12 to G32, V102 to G122, L128 to S148, V159 to L179, and A198 to L218. Residue H262 coordinates heme. 3 helical membrane passes run M264 to W281, G289 to L309, and V312 to V332. Position 320 (H320) interacts with heme.

The protein belongs to the COX15/CtaA family. Type 2 subfamily. As to quaternary structure, interacts with CtaB. It depends on heme b as a cofactor.

The protein resides in the cell membrane. It carries out the reaction Fe(II)-heme o + 2 A + H2O = Fe(II)-heme a + 2 AH2. It participates in porphyrin-containing compound metabolism; heme A biosynthesis; heme A from heme O: step 1/1. Its function is as follows. Catalyzes the conversion of heme O to heme A by two successive hydroxylations of the methyl group at C8. The first hydroxylation forms heme I, the second hydroxylation results in an unstable dihydroxymethyl group, which spontaneously dehydrates, resulting in the formyl group of heme A. This Rhodopseudomonas palustris (strain BisB18) protein is Heme A synthase.